Here is a 421-residue protein sequence, read N- to C-terminus: Ribosomal RNA large subunit methyltransferase G (421 aa).

The segment at 389–421 (EPELEQESDLNSKLDANTEVPHPQSALYGKPKA) is disordered.

This sequence belongs to the methyltransferase superfamily. RlmG family.

The protein localises to the cytoplasm. It catalyses the reaction guanosine(1835) in 23S rRNA + S-adenosyl-L-methionine = N(2)-methylguanosine(1835) in 23S rRNA + S-adenosyl-L-homocysteine + H(+). Its function is as follows. Specifically methylates the guanine in position 1835 (m2G1835) of 23S rRNA. This is Ribosomal RNA large subunit methyltransferase G from Shewanella halifaxensis (strain HAW-EB4).